A 306-amino-acid polypeptide reads, in one-letter code: tRNA pseudouridine synthase B (306 aa).

Aspartate 47 functions as the Nucleophile in the catalytic mechanism.

This sequence belongs to the pseudouridine synthase TruB family. Type 1 subfamily.

The catalysed reaction is uridine(55) in tRNA = pseudouridine(55) in tRNA. Its function is as follows. Responsible for synthesis of pseudouridine from uracil-55 in the psi GC loop of transfer RNAs. In Neisseria gonorrhoeae (strain ATCC 700825 / FA 1090), this protein is tRNA pseudouridine synthase B.